Reading from the N-terminus, the 474-residue chain is PRAME family member 14 (474 aa).

5 LRR repeats span residues Gln-15–Pro-38, Leu-204–Lys-229, Leu-271–Pro-294, Leu-319–Ala-342, and Met-391–Ala-414.

Belongs to the PRAME family.

In Homo sapiens (Human), this protein is PRAME family member 14.